Consider the following 1102-residue polypeptide: Carbamoyl phosphate synthase large chain (1102 aa).

A carboxyphosphate synthetic domain region spans residues 1–408 (MPKRSDIQSV…ALQKALRSLE (408 aa)). Positions 129, 175, 181, 182, 214, 216, 221, 247, 248, 249, 291, and 305 each coordinate ATP. The ATP-grasp 1 domain maps to 137–334 (EAVKEKIGYG…IAKIAAKLAV (198 aa)). Residues glutamine 291, glutamate 305, and asparagine 307 each coordinate Mg(2+). Residues glutamine 291, glutamate 305, and asparagine 307 each coordinate Mn(2+). Residues 409–551 (KKGSQFAFTG…YFYSSYDEES (143 aa)) form an oligomerization domain region. The segment at 552-954 (EVAPRTKPAV…AYAKSQAGAY (403 aa)) is carbamoyl phosphate synthetic domain. The ATP-grasp 2 domain occupies 682–873 (GRVLAEAGLP…LAKAAARISL (192 aa)). 10 residues coordinate ATP: arginine 718, arginine 757, leucine 759, glutamate 764, glycine 789, isoleucine 790, histidine 791, serine 792, glutamine 832, and glutamate 844. Residues glutamine 832, glutamate 844, and asparagine 846 each coordinate Mg(2+). The Mn(2+) site is built by glutamine 832, glutamate 844, and asparagine 846. Residues 955–1100 (GPLPTAGRAF…QEHAEHLTAA (146 aa)) form the MGS-like domain. The allosteric domain stretch occupies residues 955-1102 (GPLPTAGRAF…HAEHLTAARD (148 aa)).

The protein belongs to the CarB family. In terms of assembly, composed of two chains; the small (or glutamine) chain promotes the hydrolysis of glutamine to ammonia, which is used by the large (or ammonia) chain to synthesize carbamoyl phosphate. Tetramer of heterodimers (alpha,beta)4. The cofactor is Mg(2+). Mn(2+) is required as a cofactor.

The catalysed reaction is hydrogencarbonate + L-glutamine + 2 ATP + H2O = carbamoyl phosphate + L-glutamate + 2 ADP + phosphate + 2 H(+). It catalyses the reaction hydrogencarbonate + NH4(+) + 2 ATP = carbamoyl phosphate + 2 ADP + phosphate + 2 H(+). It functions in the pathway amino-acid biosynthesis; L-arginine biosynthesis; carbamoyl phosphate from bicarbonate: step 1/1. Its pathway is pyrimidine metabolism; UMP biosynthesis via de novo pathway; (S)-dihydroorotate from bicarbonate: step 1/3. Functionally, large subunit of the glutamine-dependent carbamoyl phosphate synthetase (CPSase). CPSase catalyzes the formation of carbamoyl phosphate from the ammonia moiety of glutamine, carbonate, and phosphate donated by ATP, constituting the first step of 2 biosynthetic pathways, one leading to arginine and/or urea and the other to pyrimidine nucleotides. The large subunit (synthetase) binds the substrates ammonia (free or transferred from glutamine from the small subunit), hydrogencarbonate and ATP and carries out an ATP-coupled ligase reaction, activating hydrogencarbonate by forming carboxy phosphate which reacts with ammonia to form carbamoyl phosphate. In Streptomyces griseus subsp. griseus (strain JCM 4626 / CBS 651.72 / NBRC 13350 / KCC S-0626 / ISP 5235), this protein is Carbamoyl phosphate synthase large chain.